Reading from the N-terminus, the 179-residue chain is Large ribosomal subunit protein uL5 (179 aa).

It belongs to the universal ribosomal protein uL5 family. In terms of assembly, part of the 50S ribosomal subunit; part of the 5S rRNA/L5/L18/L25 subcomplex. Contacts the 5S rRNA and the P site tRNA. Forms a bridge to the 30S subunit in the 70S ribosome.

In terms of biological role, this is one of the proteins that bind and probably mediate the attachment of the 5S RNA into the large ribosomal subunit, where it forms part of the central protuberance. In the 70S ribosome it contacts protein S13 of the 30S subunit (bridge B1b), connecting the 2 subunits; this bridge is implicated in subunit movement. Contacts the P site tRNA; the 5S rRNA and some of its associated proteins might help stabilize positioning of ribosome-bound tRNAs. The sequence is that of Large ribosomal subunit protein uL5 from Yersinia enterocolitica serotype O:8 / biotype 1B (strain NCTC 13174 / 8081).